The sequence spans 60 residues: Large ribosomal subunit protein bL32 (60 aa).

Positions 1 to 19 (MAVPKRRTSKRRKRARNTH) are enriched in basic residues. Positions 1–20 (MAVPKRRTSKRRKRARNTHK) are disordered.

Belongs to the bacterial ribosomal protein bL32 family.

The protein is Large ribosomal subunit protein bL32 of Gemmatimonas aurantiaca (strain DSM 14586 / JCM 11422 / NBRC 100505 / T-27).